A 183-amino-acid polypeptide reads, in one-letter code: DNA-directed RNA polymerase subunit Rpo7 (183 aa).

Positions 82-164 constitute an S1 motif domain; that stretch reads HEVIEGEVSQ…RLPRIALTMK (83 aa).

This sequence belongs to the eukaryotic RPB7/RPC8 RNA polymerase subunit family. Part of the 13-subunit RNA polymerase complex. Forms a stalk with Rpo4 that extends from the main structure.

The protein localises to the cytoplasm. The catalysed reaction is RNA(n) + a ribonucleoside 5'-triphosphate = RNA(n+1) + diphosphate. DNA-dependent RNA polymerase (RNAP) catalyzes the transcription of DNA into RNA using the four ribonucleoside triphosphates as substrates. In terms of biological role, reconstitution experiments show this subunit is required for basic activity. In Sulfolobus acidocaldarius (strain ATCC 33909 / DSM 639 / JCM 8929 / NBRC 15157 / NCIMB 11770), this protein is DNA-directed RNA polymerase subunit Rpo7.